A 184-amino-acid polypeptide reads, in one-letter code: Gremlin-1 (184 aa).

An N-terminal signal peptide occupies residues 1–24 (MNRTAYTVGALLLLLGTLLPAAEG). Asparagine 2 and asparagine 42 each carry an N-linked (GlcNAc...) asparagine glycan. The disordered stretch occupies residues 24-78 (GKKKGSQGAIPPPDKAQHNDSEQTQSPPQPGSRTRGRGQGRGTAMPGEEVLESSQ). Cystine bridges form between cysteine 94–cysteine 144, cysteine 108–cysteine 158, cysteine 118–cysteine 176, and cysteine 122–cysteine 178. The region spanning 94-184 (CKTQPLKQTI…QCRCISIDLD (91 aa)) is the CTCK domain.

The protein belongs to the DAN family. As to quaternary structure, homodimer; can also form homooligomers. Interacts with BMP2; can form higher oligomers with BMP2. Interacts with SLIT1 and SLIT2 in a glycosylation-dependent manner. Highly expressed in the brain, kidney, spleen, and testis and weakly expressed in the lung and liver. Predominantly expressed in differentiated cells as neurons in brain, type I cells in lung and globlet cells in intestine.

Its subcellular location is the secreted. Its function is as follows. Cytokine that may play an important role during carcinogenesis and metanephric kidney organogenesis, as a BMP antagonist required for early limb outgrowth and patterning in maintaining the FGF4-SHH feedback loop. Down-regulates the BMP4 signaling in a dose-dependent manner. Antagonist of BMP2; inhibits BMP2-mediated differentiation of osteoblasts (in vitro). Acts as inhibitor of monocyte chemotaxis. Can inhibit the growth or viability of normal cells but not transformed cells when is overexpressed. This chain is Gremlin-1 (Grem1), found in Rattus norvegicus (Rat).